The following is a 308-amino-acid chain: tRNA dimethylallyltransferase (308 aa).

14–21 (GPTASGKT) provides a ligand contact to ATP. 16–21 (TASGKT) contributes to the substrate binding site. Interaction with substrate tRNA regions lie at residues 39-42 (DSAL), 163-167 (QRLAR), and 244-249 (RCVGYR).

It belongs to the IPP transferase family. In terms of assembly, monomer. Mg(2+) is required as a cofactor.

It catalyses the reaction adenosine(37) in tRNA + dimethylallyl diphosphate = N(6)-dimethylallyladenosine(37) in tRNA + diphosphate. In terms of biological role, catalyzes the transfer of a dimethylallyl group onto the adenine at position 37 in tRNAs that read codons beginning with uridine, leading to the formation of N6-(dimethylallyl)adenosine (i(6)A). The chain is tRNA dimethylallyltransferase from Shewanella halifaxensis (strain HAW-EB4).